The following is a 262-amino-acid chain: Polyamine aminopropyltransferase (262 aa).

The PABS domain maps to 1–249; that stretch reads MWITQEITPY…DIHRAAFALP (249 aa). An S-methyl-5'-thioadenosine-binding site is contributed by asparagine 29. Aspartate 83 lines the spermidine pocket. Residue aspartate 155 is the Proton acceptor of the active site.

It belongs to the spermidine/spermine synthase family. In terms of assembly, homodimer or homotetramer.

The protein localises to the cytoplasm. The enzyme catalyses S-adenosyl 3-(methylsulfanyl)propylamine + putrescine = S-methyl-5'-thioadenosine + spermidine + H(+). It functions in the pathway amine and polyamine biosynthesis; spermidine biosynthesis; spermidine from putrescine: step 1/1. In terms of biological role, catalyzes the irreversible transfer of a propylamine group from the amino donor S-adenosylmethioninamine (decarboxy-AdoMet) to putrescine (1,4-diaminobutane) to yield spermidine. This chain is Polyamine aminopropyltransferase, found in Helicobacter acinonychis (strain Sheeba).